A 626-amino-acid chain; its full sequence is Chaperone protein DnaK (626 aa).

Thr-197 bears the Phosphothreonine; by autocatalysis mark. Composition is skewed to basic and acidic residues over residues 512–528 and 539–551; these read DAEA…EAVE and QTEK…GEKI. Disordered stretches follow at residues 512 to 551 and 601 to 626; these read DAEA…GEKI and DQNA…AEVE.

Belongs to the heat shock protein 70 family.

Its function is as follows. Acts as a chaperone. This Campylobacter fetus subsp. fetus (strain 82-40) protein is Chaperone protein DnaK.